A 712-amino-acid chain; its full sequence is Methionine--tRNA ligase (712 aa).

A 'HIGH' region motif is present at residues 20–30 (PYANGKAHIGH). Zn(2+) contacts are provided by C151, C154, C163, and C167. A 'KMSKS' region motif is present at residues 334–338 (KFSKT). Residue K337 participates in ATP binding. Residues 559–585 (ANAKKSAAKGGEKEPSKSEGMGPSEEA) are disordered. Residues 610-712 (DFAKLDIRVG…KEIKPGSRIR (103 aa)) enclose the tRNA-binding domain.

It belongs to the class-I aminoacyl-tRNA synthetase family. MetG type 1 subfamily. As to quaternary structure, homodimer. Requires Zn(2+) as cofactor.

It is found in the cytoplasm. It carries out the reaction tRNA(Met) + L-methionine + ATP = L-methionyl-tRNA(Met) + AMP + diphosphate. Its function is as follows. Is required not only for elongation of protein synthesis but also for the initiation of all mRNA translation through initiator tRNA(fMet) aminoacylation. The chain is Methionine--tRNA ligase from Methanosarcina acetivorans (strain ATCC 35395 / DSM 2834 / JCM 12185 / C2A).